Here is a 355-residue protein sequence, read N- to C-terminus: UPF0324 membrane protein PA5383 (355 aa).

Helical transmembrane passes span 20-37 (IPGLLLSAALAGVAILLG), 44-66 (HNGISALTLAIVLGILVGNTLYP), 71-93 (GSAAGVGFSKQILLRAGIILYGL), 100-122 (IAGVGLHGVLLDALMLASTFGLA), 137-159 (TLLIGAGSSICGAAAVMATEPVV), 166-188 (VAVAVSTVVVFGTLGIFLYPALF), 233-255 (AVIAKMVRVMMLAPFLILLSAWL), 275-297 (WFAVGFVLVAGLNSLVSLPPALV), 307-324 (LLAMAMAGLGLGTHLSAI), and 331-353 (PLLLAALLFAWLVLGGGFLTRLA).

The protein belongs to the UPF0324 family.

The protein localises to the cell membrane. This is UPF0324 membrane protein PA5383 from Pseudomonas aeruginosa (strain ATCC 15692 / DSM 22644 / CIP 104116 / JCM 14847 / LMG 12228 / 1C / PRS 101 / PAO1).